The chain runs to 698 residues: Elongation factor G (698 aa).

Residues Ala10–Thr285 form the tr-type G domain. GTP contacts are provided by residues Ala19–Thr26, Asp83–His87, and Asn137–Asp140.

This sequence belongs to the TRAFAC class translation factor GTPase superfamily. Classic translation factor GTPase family. EF-G/EF-2 subfamily.

It is found in the cytoplasm. In terms of biological role, catalyzes the GTP-dependent ribosomal translocation step during translation elongation. During this step, the ribosome changes from the pre-translocational (PRE) to the post-translocational (POST) state as the newly formed A-site-bound peptidyl-tRNA and P-site-bound deacylated tRNA move to the P and E sites, respectively. Catalyzes the coordinated movement of the two tRNA molecules, the mRNA and conformational changes in the ribosome. The sequence is that of Elongation factor G from Parafrankia sp. (strain EAN1pec).